Here is a 671-residue protein sequence, read N- to C-terminus: MDRNAAERRIAELRAEIRRHDHLYYVLDRPELTDAEYDALYRELLKLEEEHPELVTPDSPSRRVGGAPLEKFKQVTHRIPMLSLENAFTDGDIAEFDARVKRALALPAGEEIAYVCEPKLDGLAVELVYEYGTLTVGSTRGDGVVGENVTQNLKTVKSIPLRLEGENPPELLEVRGEVFLPLAAFQRLNAQREEEGEPPFANPRNAAAGSLRQLDSRITARRPLTMFCYAPGEIRGADFGSQGEFLSALRQRGLPVTSLARQVTGVAGVLAYYREMTEKRDTLPYEIDGVVVKVDSFPLQRELGEKSRSPRWAVAVKFPPRQAVTVIEDIVPSVGRTGVITPTANLRPVEVSGVTVSRATLHNWEEMERKDIRIGDTVVIERAGDVIPAVVKVLTEKRSGSERFLPIPAACPECGSEVVKIPDEVAVRCMGLSCPAQIRESIIHFASRNAMDMEGLGEKYIEQLLRLGLVGNVADLYTLTRDDFMKFDRMGEKLAENLLNAIEASKKRELSRFIFALGIRHVGEHTAKLLATAFGSIDNLARATEAELLSIREIGPQVAQSITTFFHNEGNRETIRRMVEAGVEPTVEEKKVGGKFTGKTFVFTGTLIRFSRSEAQKMVESEGGHAAGSVSKKTDYVVAGDEAGSKLDKARQLGVTVLAEDEFLQMLEGEQ.

Residues 34–38 (DAEYD), 83–84 (SL), and E117 contribute to the NAD(+) site. K119 (N6-AMP-lysine intermediate) is an active-site residue. The NAD(+) site is built by R140, E177, K293, and K317. The Zn(2+) site is built by C411, C414, C429, and C434. Positions 591–671 (KVGGKFTGKT…EFLQMLEGEQ (81 aa)) constitute a BRCT domain.

Belongs to the NAD-dependent DNA ligase family. LigA subfamily. Requires Mg(2+) as cofactor. Mn(2+) is required as a cofactor.

The catalysed reaction is NAD(+) + (deoxyribonucleotide)n-3'-hydroxyl + 5'-phospho-(deoxyribonucleotide)m = (deoxyribonucleotide)n+m + AMP + beta-nicotinamide D-nucleotide.. Its function is as follows. DNA ligase that catalyzes the formation of phosphodiester linkages between 5'-phosphoryl and 3'-hydroxyl groups in double-stranded DNA using NAD as a coenzyme and as the energy source for the reaction. It is essential for DNA replication and repair of damaged DNA. The chain is DNA ligase from Geobacter metallireducens (strain ATCC 53774 / DSM 7210 / GS-15).